Here is a 487-residue protein sequence, read N- to C-terminus: Betaine aldehyde dehydrogenase (487 aa).

The K(+) site is built by Ser-26 and Asp-93. 150 to 152 (GAW) lines the NAD(+) pocket. The active-site Charge relay system is Lys-162. NAD(+) contacts are provided by residues 176 to 179 (KPSE) and 229 to 232 (SVPT). Leu-244 serves as a coordination point for K(+). Catalysis depends on Glu-250, which acts as the Proton acceptor. The NAD(+) site is built by Gly-252, Cys-284, and Glu-384. Cys-284 serves as the catalytic Nucleophile. Residue Cys-284 is modified to Cysteine sulfenic acid (-SOH). Positions 454 and 457 each coordinate K(+). The active-site Charge relay system is Glu-461.

The protein belongs to the aldehyde dehydrogenase family. As to quaternary structure, dimer of dimers. Requires K(+) as cofactor.

It catalyses the reaction betaine aldehyde + NAD(+) + H2O = glycine betaine + NADH + 2 H(+). It participates in amine and polyamine biosynthesis; betaine biosynthesis via choline pathway; betaine from betaine aldehyde: step 1/1. Functionally, involved in the biosynthesis of the osmoprotectant glycine betaine. Catalyzes the irreversible oxidation of betaine aldehyde to the corresponding acid. This Rhizobium etli (strain ATCC 51251 / DSM 11541 / JCM 21823 / NBRC 15573 / CFN 42) protein is Betaine aldehyde dehydrogenase.